Consider the following 292-residue polypeptide: Ribosomal protein L11 methyltransferase (292 aa).

Residues threonine 143, glycine 164, aspartate 186, and asparagine 228 each coordinate S-adenosyl-L-methionine.

Belongs to the methyltransferase superfamily. PrmA family.

It localises to the cytoplasm. It catalyses the reaction L-lysyl-[protein] + 3 S-adenosyl-L-methionine = N(6),N(6),N(6)-trimethyl-L-lysyl-[protein] + 3 S-adenosyl-L-homocysteine + 3 H(+). Functionally, methylates ribosomal protein L11. This Tolumonas auensis (strain DSM 9187 / NBRC 110442 / TA 4) protein is Ribosomal protein L11 methyltransferase.